The chain runs to 359 residues: Ribosomal RNA large subunit methyltransferase M (359 aa).

S-adenosyl-L-methionine-binding positions include Ser-186, Cys-219–Gly-222, Asp-238, Asp-258, and Asp-275. Lys-304 serves as the catalytic Proton acceptor.

It belongs to the class I-like SAM-binding methyltransferase superfamily. RNA methyltransferase RlmE family. RlmM subfamily. Monomer.

It is found in the cytoplasm. It catalyses the reaction cytidine(2498) in 23S rRNA + S-adenosyl-L-methionine = 2'-O-methylcytidine(2498) in 23S rRNA + S-adenosyl-L-homocysteine + H(+). Its function is as follows. Catalyzes the 2'-O-methylation at nucleotide C2498 in 23S rRNA. This is Ribosomal RNA large subunit methyltransferase M from Vibrio vulnificus (strain YJ016).